We begin with the raw amino-acid sequence, 298 residues long: Leucine-rich repeat-containing protein 55 (298 aa).

Residues 1 to 34 (MGDTWAQLPWPGPPHSALLLVFFLLAAGVMHSDA) form the signal peptide. The LRRNT domain occupies 35–65 (GTSCPVLCTCRNQVVDCSNQRLFSVPPDLPM). 2 disulfides stabilise this stretch: C38-C44 and C42-C51. LRR repeat units lie at residues 66 to 87 (DTRN…YLTC), 90 to 111 (ELRV…LFLH), 114 to 135 (RLAH…MFRE), 138 to 160 (GLVH…AFQG), and 163 to 186 (HLRD…EGLP). Residues 196–251 (NPWVCGCTMEPLLKWLRNRIQRCTADSQLAECRGPPEVEGAPLFSLTEESFKACHL) form the LRRCT domain. 2 cysteine pairs are disulfide-bonded: C200/C227 and C202/C249. A helical membrane pass occupies residues 259-279 (LFIAFVGFVVSIASVATNFLL).

In terms of assembly, interacts with KCNMA1.

It is found in the cell membrane. Functionally, auxiliary protein of the large-conductance, voltage and calcium-activated potassium channel (BK alpha). Modulates gating properties by producing a marked shift in the BK channel's voltage dependence of activation in the hyperpolarizing direction, and in the absence of calcium. In Mus musculus (Mouse), this protein is Leucine-rich repeat-containing protein 55 (Lrrc55).